A 251-amino-acid polypeptide reads, in one-letter code: CDP-diacylglycerol pyrophosphatase (251 aa).

A helical transmembrane segment spans residues 4-24 (AGLLFLVMIVIAVVATGIGYW).

Belongs to the Cdh family.

Its subcellular location is the cell inner membrane. The catalysed reaction is a CDP-1,2-diacyl-sn-glycerol + H2O = a 1,2-diacyl-sn-glycero-3-phosphate + CMP + 2 H(+). It functions in the pathway phospholipid metabolism; CDP-diacylglycerol degradation; phosphatidate from CDP-diacylglycerol: step 1/1. The polypeptide is CDP-diacylglycerol pyrophosphatase (Escherichia coli O45:K1 (strain S88 / ExPEC)).